Here is a 565-residue protein sequence, read N- to C-terminus: NAD-dependent malic enzyme (565 aa).

The Proton donor role is filled by tyrosine 104. Arginine 157 is a binding site for NAD(+). The active-site Proton acceptor is the lysine 175. A divalent metal cation-binding residues include glutamate 246, aspartate 247, and aspartate 270. Residues aspartate 270 and asparagine 418 each coordinate NAD(+).

Belongs to the malic enzymes family. In terms of assembly, homotetramer. Mg(2+) is required as a cofactor. Mn(2+) serves as cofactor.

The catalysed reaction is (S)-malate + NAD(+) = pyruvate + CO2 + NADH. It carries out the reaction oxaloacetate + H(+) = pyruvate + CO2. The sequence is that of NAD-dependent malic enzyme from Yersinia enterocolitica serotype O:8 / biotype 1B (strain NCTC 13174 / 8081).